The sequence spans 133 residues: AWNRRSRSCGGVLRDPPGKIFNSDGPQKDCVWTIKVKPHFHVVIAIPPLNLSCGKEYVELLDGPPGSEIIGKICGGISLVFRSSSNIATIKYLRTSGQRASPFHIYYYADPEGPLPFPYFERQTIIATEKNIP.

At Ala1 the chain carries N-acetylalanine. Disulfide bonds link Cys9–Cys30 and Cys53–Cys74. Positions 9-110 (CGGVLRDPPG…SPFHIYYYAD (102 aa)) constitute a CUB domain. The segment at 73–110 (ICGGISLVFRSSSNIATIKYLRTSGQRASPFHIYYYAD) is heparin-binding.

This sequence belongs to the spermadhesin family.

It localises to the secreted. In terms of biological role, mediates the binding of spermatozoa to component(s) of the egg's zona pellucida by a carbohydrate-binding mechanism. It is a secretory component of the male accessory glands being coated to the sperm surface at the time of ejaculation. The protein is Carbohydrate-binding protein AWN of Equus caballus (Horse).